The chain runs to 167 residues: Ion-translocating oxidoreductase complex subunit B (167 aa).

The segment at 1 to 22 (MITLIIFSFLSFLLGIILSFTA) is hydrophobic. Residues 28 to 87 (QEDPIVEIVNELLPQSQCAQCGYSGCYPYAKAIVENSEKINKCIPGGTDLISAISSVLSI) form the 4Fe-4S domain. Residues Cys-45, Cys-48, Cys-53, Cys-70, Cys-113, Cys-116, Cys-119, Cys-123, Cys-143, Cys-146, Cys-149, and Cys-153 each coordinate [4Fe-4S] cluster. 4Fe-4S ferredoxin-type domains lie at 104 to 133 (NTVL…GAPN) and 134 to 163 (FIHT…IKKE).

It belongs to the 4Fe4S bacterial-type ferredoxin family. RnfB subfamily. The complex is composed of six subunits: RnfA, RnfB, RnfC, RnfD, RnfE and RnfG. [4Fe-4S] cluster is required as a cofactor.

The protein resides in the cell inner membrane. In terms of biological role, part of a membrane-bound complex that couples electron transfer with translocation of ions across the membrane. The protein is Ion-translocating oxidoreductase complex subunit B of Buchnera aphidicola subsp. Acyrthosiphon pisum (strain Tuc7).